The sequence spans 427 residues: Serine/threonine-protein kinase AFC2 (427 aa).

One can recognise a Protein kinase domain in the interval 98–423 (YKIYSKMGEG…AREALRHPFF (326 aa)). ATP contacts are provided by residues 104 to 112 (MGEGTFGQV) and Lys127. Catalysis depends on Asp223, which acts as the Proton acceptor.

This sequence belongs to the protein kinase superfamily. CMGC Ser/Thr protein kinase family. Lammer subfamily.

It carries out the reaction L-seryl-[protein] + ATP = O-phospho-L-seryl-[protein] + ADP + H(+). The catalysed reaction is L-threonyl-[protein] + ATP = O-phospho-L-threonyl-[protein] + ADP + H(+). The enzyme catalyses L-tyrosyl-[protein] + ATP = O-phospho-L-tyrosyl-[protein] + ADP + H(+). The sequence is that of Serine/threonine-protein kinase AFC2 (AFC2) from Arabidopsis thaliana (Mouse-ear cress).